The primary structure comprises 434 residues: Ribosomal protein uS12 methylthiotransferase RimO (434 aa).

The MTTase N-terminal domain occupies 6–122 (NRVFLLSLGC…ILTAIGARYR (117 aa)). Residues Cys15, Cys51, Cys85, Cys146, Cys150, and Cys153 each contribute to the [4Fe-4S] cluster site. One can recognise a Radical SAM core domain in the interval 132–361 (TAPGHTSFLK…MELQEGISEE (230 aa)). The TRAM domain occupies 364–431 (KRLEGREIAV…PYELFGTVLK (68 aa)).

It belongs to the methylthiotransferase family. RimO subfamily. [4Fe-4S] cluster serves as cofactor.

The protein resides in the cytoplasm. The enzyme catalyses L-aspartate(89)-[ribosomal protein uS12]-hydrogen + (sulfur carrier)-SH + AH2 + 2 S-adenosyl-L-methionine = 3-methylsulfanyl-L-aspartate(89)-[ribosomal protein uS12]-hydrogen + (sulfur carrier)-H + 5'-deoxyadenosine + L-methionine + A + S-adenosyl-L-homocysteine + 2 H(+). Catalyzes the methylthiolation of an aspartic acid residue of ribosomal protein uS12. This is Ribosomal protein uS12 methylthiotransferase RimO from Chlorobium phaeovibrioides (strain DSM 265 / 1930) (Prosthecochloris vibrioformis (strain DSM 265)).